A 143-amino-acid chain; its full sequence is ATP synthase F(0) complex subunit C2, mitochondrial (143 aa).

The transit peptide at 1–68 (MYTCAKFVST…RSFQTSAISR (68 aa)) directs the protein to the mitochondrion. The helical transmembrane segment at 84 to 104 (VGVAGSGAGIGTVFGSLIIGY) threads the bilayer. Residue lysine 111 is modified to N6,N6,N6-trimethyllysine. Residues 119-139 (ILGFALSEAMGLFCLMVAFLI) traverse the membrane as a helical segment.

This sequence belongs to the ATPase C chain family. As to quaternary structure, F-type ATPases have 2 components, CF(1) - the catalytic core - and CF(0) - the membrane proton channel. CF(1) has five subunits: alpha(3), beta(3), gamma(1), delta(1), epsilon(1). CF(0) has three main subunits: a, b and c. Interacts with DNAJC30; interaction is direct. Post-translationally, trimethylated by ATPSCKMT at Lys-111. Methylation is required for proper incorporation of the C subunit into the ATP synthase complex and mitochondrial respiration.

It is found in the mitochondrion membrane. Mitochondrial membrane ATP synthase (F(1)F(0) ATP synthase or Complex V) produces ATP from ADP in the presence of a proton gradient across the membrane which is generated by electron transport complexes of the respiratory chain. F-type ATPases consist of two structural domains, F(1) - containing the extramembraneous catalytic core and F(0) - containing the membrane proton channel, linked together by a central stalk and a peripheral stalk. During catalysis, ATP synthesis in the catalytic domain of F(1) is coupled via a rotary mechanism of the central stalk subunits to proton translocation. Part of the complex F(0) domain. A homomeric c-ring of probably 10 subunits is part of the complex rotary element. This chain is ATP synthase F(0) complex subunit C2, mitochondrial, found in Bos taurus (Bovine).